Consider the following 64-residue polypeptide: Neurotoxin BmK-II (64 aa).

The LCN-type CS-alpha/beta domain occupies 2 to 64 (RDAYIAKPHN…VPIRIPGNCH (63 aa)). 4 disulfide bridges follow: C12–C63, C16–C36, C22–C46, and C26–C48.

It belongs to the long (4 C-C) scorpion toxin superfamily. Sodium channel inhibitor family. Alpha subfamily. In terms of tissue distribution, expressed by the venom gland.

Its subcellular location is the secreted. In terms of biological role, binds to sodium channels (Nav) and inhibits the inactivation of the activated channels, thereby blocking neuronal transmission. This toxin is active against mammals and insects. BmK-II is 6-fold less toxic than BmK-I. In Olivierus martensii (Manchurian scorpion), this protein is Neurotoxin BmK-II.